Here is a 130-residue protein sequence, read N- to C-terminus: Large-conductance mechanosensitive channel (130 aa).

Residues 1-14 (MWNEFKAFAMRGNI) lie on the Cytoplasmic side of the membrane. The chain crosses the membrane as a helical span at residues 15–43 (VDLAIGVVIGGAFGKIVTSLVNDIIMPLV). Topologically, residues 44-65 (GLLLGGLDFSGLSFTFGDAVVK) are extracellular. The helical transmembrane segment at 66–85 (YGSFIQTIVNFLIISFSIFI) threads the bilayer. The Cytoplasmic portion of the chain corresponds to 86–130 (VIRTLNGLRRKKEAEEEAAEEAVDAQEELLKEIRDLLKQQAKSPE).

Belongs to the MscL family. In terms of assembly, homopentamer.

The protein localises to the cell membrane. Its function is as follows. Channel that opens in response to stretch forces in the membrane lipid bilayer. Forms a nonselective ion channel with a conductance of about 4 nanosiemens. May participate in the regulation of osmotic pressure changes within the cell. The protein is Large-conductance mechanosensitive channel of Bacillus subtilis (strain 168).